The primary structure comprises 100 residues: Large ribosomal subunit protein uL23 (100 aa).

It belongs to the universal ribosomal protein uL23 family. In terms of assembly, part of the 50S ribosomal subunit. Contacts protein L29, and trigger factor when it is bound to the ribosome.

In terms of biological role, one of the early assembly proteins it binds 23S rRNA. One of the proteins that surrounds the polypeptide exit tunnel on the outside of the ribosome. Forms the main docking site for trigger factor binding to the ribosome. The polypeptide is Large ribosomal subunit protein uL23 (Prochlorococcus marinus (strain AS9601)).